Consider the following 440-residue polypeptide: Xylose isomerase (440 aa).

Catalysis depends on residues His-100 and Asp-103. Mg(2+)-binding residues include Glu-231, Glu-267, His-270, Asp-295, Asp-306, Asp-308, and Asp-338.

This sequence belongs to the xylose isomerase family. Homotetramer. Mg(2+) is required as a cofactor.

It localises to the cytoplasm. It carries out the reaction alpha-D-xylose = alpha-D-xylulofuranose. The protein is Xylose isomerase of Burkholderia orbicola (strain MC0-3).